Here is a 382-residue protein sequence, read N- to C-terminus: Prolargin (382 aa).

An N-terminal signal peptide occupies residues 1 to 20; that stretch reads MRSPLCWLLPLLILASVAQG. Residues 19–66 are disordered; it reads QGQPTRRPRPGTGPGRRPRPRPRPTPSFPQPDEPAEPTDLPPPLPPGP. Composition is skewed to pro residues over residues 41–50 and 57–66; these read RPTPSFPQPD and DLPPPLPPGP. LRR repeat units lie at residues 95-114, 115-138, 139-162, 163-183, 184-207, 208-233, 234-254, 255-278, 279-303, 304-323, 324-362, and 363-382; these read RKVP…NNFI, TELP…NNRI, RKID…KNQL, EEVP…QNHI, SRIP…HNRL, SDGV…HNIL, RKMP…SNKI, ETIP…YNKL, TDRG…HNRI, SSVP…NNSI, EKIN…GNYL, and KPPI…SVVI. Residue Asn124 is glycosylated (N-linked (GlcNAc...) asparagine). Residues Asn289, Asn320, and Asn327 are each glycosylated (N-linked (GlcNAc...) asparagine). Cys332 and Cys373 are oxidised to a cystine.

It belongs to the small leucine-rich proteoglycan (SLRP) family. SLRP class II subfamily. Binds the basement membrane heparan sulfate proteoglycan perlecan and triple helical collagens type I and type II. In terms of processing, glycosylated; contains heparan sulfate. Connective tissue.

The protein localises to the secreted. Its subcellular location is the extracellular space. It is found in the extracellular matrix. Its function is as follows. May anchor basement membranes to the underlying connective tissue. The chain is Prolargin (PRELP) from Homo sapiens (Human).